The chain runs to 559 residues: Polypeptide N-acetylgalactosaminyltransferase 1 (559 aa).

Over 1–8 (MRKFAYCK) the chain is Cytoplasmic. A helical; Signal-anchor for type II membrane protein transmembrane segment spans residues 9 to 28 (VVLATSLIWVLLDMFLLLYF). The Lumenal segment spans residues 29–559 (SECNKCDEKK…LRNVTLPEIF (531 aa)). A disordered region spans residues 45–65 (GDVLEPVQKPHEGPGEMGKPV). Asparagine 95 carries N-linked (GlcNAc...) asparagine glycosylation. Cystine bridges form between cysteine 106–cysteine 339, cysteine 330–cysteine 408, cysteine 442–cysteine 459, cysteine 482–cysteine 497, and cysteine 523–cysteine 540. A catalytic subdomain A region spans residues 115–225 (LPTTSVVIVF…VGWLEPLLAR (111 aa)). 2 residues coordinate substrate: aspartate 156 and arginine 186. Residues aspartate 209 and histidine 211 each coordinate Mn(2+). Residues 285 to 347 (PVRTPTMAGG…TCSHVGHVFR (63 aa)) form a catalytic subdomain B region. Substrate is bound at residue tryptophan 316. Histidine 344 provides a ligand contact to Mn(2+). 2 residues coordinate substrate: arginine 347 and tyrosine 352. Residues 429 to 551 (FSLGEIRNVE…GSRSQQWLLR (123 aa)) enclose the Ricin B-type lectin domain. The N-linked (GlcNAc...) asparagine glycan is linked to asparagine 552.

It belongs to the glycosyltransferase 2 family. GalNAc-T subfamily. Mn(2+) is required as a cofactor. Widely expressed. Expressed in all tissues tested.

The protein resides in the golgi apparatus. It is found in the golgi stack membrane. The protein localises to the secreted. The enzyme catalyses L-seryl-[protein] + UDP-N-acetyl-alpha-D-galactosamine = a 3-O-[N-acetyl-alpha-D-galactosaminyl]-L-seryl-[protein] + UDP + H(+). It carries out the reaction L-threonyl-[protein] + UDP-N-acetyl-alpha-D-galactosamine = a 3-O-[N-acetyl-alpha-D-galactosaminyl]-L-threonyl-[protein] + UDP + H(+). It participates in protein modification; protein glycosylation. Its function is as follows. Catalyzes the initial reaction in O-linked oligosaccharide biosynthesis, the transfer of an N-acetyl-D-galactosamine residue to a serine or threonine residue on the protein receptor. Has a broad spectrum of substrates such as apomucin-, MUC5AC-, MUC1- and MUC2-derived peptides. The polypeptide is Polypeptide N-acetylgalactosaminyltransferase 1 (Homo sapiens (Human)).